An 843-amino-acid polypeptide reads, in one-letter code: Adenylate cyclase (843 aa).

The segment at 1–542 (MECNLAQAKQ…NLRQSFPSTI (542 aa)) is catalytic. The tract at residues 549-843 (SDLLNQCEIR…VPFKFRQMNK (295 aa)) is regulatory.

It belongs to the adenylyl cyclase class-1 family.

It is found in the cytoplasm. It catalyses the reaction ATP = 3',5'-cyclic AMP + diphosphate. Its function is as follows. Plays an essential role in competence development. This is Adenylate cyclase (cyaA) from Haemophilus influenzae (strain ATCC 51907 / DSM 11121 / KW20 / Rd).